Reading from the N-terminus, the 176-residue chain is Retinol-binding protein 4-A (176 aa).

Ser-1 is subject to N-acetylserine. Cystine bridges form between Cys-3–Cys-159, Cys-69–Cys-173, and Cys-119–Cys-128. Gln-97 contacts substrate.

Belongs to the calycin superfamily. Lipocalin family.

The protein localises to the secreted. In terms of biological role, RBP delivers retinol from the liver stores to the peripheral tissues. In plasma, the RBP-retinol complex interacts with transthyretin, this prevents its loss by filtration through the kidney glomeruli. The chain is Retinol-binding protein 4-A (rbp4a) from Oncorhynchus mykiss (Rainbow trout).